A 128-amino-acid chain; its full sequence is 3-aminoacrylate deaminase RutC (128 aa).

The protein belongs to the RutC family. Homotrimer.

It carries out the reaction (Z)-3-aminoacrylate + H2O + H(+) = 3-oxopropanoate + NH4(+). Functionally, involved in pyrimidine catabolism. Catalyzes the deamination of 3-aminoacrylate to malonic semialdehyde, a reaction that can also occur spontaneously. RutC may facilitate the reaction and modulate the metabolic fitness, rather than catalyzing essential functions. This chain is 3-aminoacrylate deaminase RutC, found in Escherichia coli O157:H7.